Consider the following 98-residue polypeptide: NADH-ubiquinone oxidoreductase chain 4L (98 aa).

A run of 3 helical transmembrane segments spans residues 1–21, 29–49, and 61–81; these read MPVIYINLIAAFFMAFMGLLI, SLLCLEGMMLSLFILNSTLAL, and IILLVFAACEAALGLSLLVMV.

This sequence belongs to the complex I subunit 4L family. As to quaternary structure, core subunit of respiratory chain NADH dehydrogenase (Complex I) which is composed of 45 different subunits.

The protein resides in the mitochondrion inner membrane. The enzyme catalyses a ubiquinone + NADH + 5 H(+)(in) = a ubiquinol + NAD(+) + 4 H(+)(out). In terms of biological role, core subunit of the mitochondrial membrane respiratory chain NADH dehydrogenase (Complex I) which catalyzes electron transfer from NADH through the respiratory chain, using ubiquinone as an electron acceptor. Part of the enzyme membrane arm which is embedded in the lipid bilayer and involved in proton translocation. The sequence is that of NADH-ubiquinone oxidoreductase chain 4L (MT-ND4L) from Echinops telfairi (Lesser hedgehog tenrec).